The chain runs to 203 residues: MLTEQQRRELDWEKTDGLMPAIVQHAVSGEVLMLGYMNPQALDKTIESGHVTFFSRTKQRLWTKGETSGHVLNVVSIAPDCDNDTLLVLANPVGPTCHKGTSSCFGDASHQWLFLYQLEQLLAERKTADPTSSYTAKLYASGTKRIAQKVGEEGVETALAATVNDRFELTNEASDLMYHLLVLLQDQDLNLTTVIDNLRKRHQ.

Positions 1–114 (MLTEQQRREL…FGDASHQWLF (114 aa)) are phosphoribosyl-AMP cyclohydrolase. The tract at residues 115 to 203 (LYQLEQLLAE…VIDNLRKRHQ (89 aa)) is phosphoribosyl-ATP pyrophosphohydrolase.

In the N-terminal section; belongs to the PRA-CH family. This sequence in the C-terminal section; belongs to the PRA-PH family.

It localises to the cytoplasm. The enzyme catalyses 1-(5-phospho-beta-D-ribosyl)-ATP + H2O = 1-(5-phospho-beta-D-ribosyl)-5'-AMP + diphosphate + H(+). The catalysed reaction is 1-(5-phospho-beta-D-ribosyl)-5'-AMP + H2O = 1-(5-phospho-beta-D-ribosyl)-5-[(5-phospho-beta-D-ribosylamino)methylideneamino]imidazole-4-carboxamide. The protein operates within amino-acid biosynthesis; L-histidine biosynthesis; L-histidine from 5-phospho-alpha-D-ribose 1-diphosphate: step 2/9. Its pathway is amino-acid biosynthesis; L-histidine biosynthesis; L-histidine from 5-phospho-alpha-D-ribose 1-diphosphate: step 3/9. This is Histidine biosynthesis bifunctional protein HisIE (hisI) from Salmonella typhimurium (strain LT2 / SGSC1412 / ATCC 700720).